Here is a 318-residue protein sequence, read N- to C-terminus: Malate dehydrogenase (318 aa).

NAD(+) contacts are provided by residues Gly11–Gly17 and Asp37. The substrate site is built by Arg86 and Arg92. NAD(+) contacts are provided by residues Asn99 and Val122 to Asn124. Substrate contacts are provided by Asn124 and Arg155. His179 (proton acceptor) is an active-site residue.

The protein belongs to the LDH/MDH superfamily. MDH type 3 family.

It catalyses the reaction (S)-malate + NAD(+) = oxaloacetate + NADH + H(+). Functionally, catalyzes the reversible oxidation of malate to oxaloacetate. This Nitratiruptor sp. (strain SB155-2) protein is Malate dehydrogenase.